The following is a 140-amino-acid chain: MLLHIIARGKIARSPEEELVTRYEKRLTWPVKLTELPETGGRIPDPQTPFKTVLLDERGKDLSSHRLARQLERWRDDGMRETRFVLGAADGHAQEERAEADLLLAFGSATWPHLLARAMLMEQLYRATSILAGHPYHRAG.

Residues leucine 55 and glycine 87 each coordinate S-adenosyl-L-methionine.

Belongs to the RNA methyltransferase RlmH family. As to quaternary structure, homodimer.

It localises to the cytoplasm. The catalysed reaction is pseudouridine(1915) in 23S rRNA + S-adenosyl-L-methionine = N(3)-methylpseudouridine(1915) in 23S rRNA + S-adenosyl-L-homocysteine + H(+). Specifically methylates the pseudouridine at position 1915 (m3Psi1915) in 23S rRNA. The chain is Ribosomal RNA large subunit methyltransferase H from Erythrobacter litoralis (strain HTCC2594).